Consider the following 917-residue polypeptide: MPGPSPGLRRALLGLWAALGLGILGISAVALEPFWADLQPRVALVERGGSLWLNCSTNCPRPERGGLETSLRRNGTQRGLRWLARQLVDIREPETQPVCFFRCARRTLQARGLIRTFQRPDRVELVPLPSWQPVGENFTLSCRVPGAGPRASLTLTLLRGGQELIRRSFVGEPPRARGAMLTARVLARREDHRVNFSCLAELDLRPHGLGLFANSSAPRQLRTFAMPPHSPSLIAPRVLEVDSERPVTCTLDGLFPAPEAGVYLSLGDQRLNPNVTLDGDSLVATATATASAEQEGTKQLMCVVTLGGESRETQENLTVYSFPTPLLTLSEPEAPEGKMVTISCWAGARALVTLEGIPAAVPGQPAELQLNVTKNDDKRGFFCDAALDVDGETLRKNQSSELRVLYAPRLDDLDCPRSWTWPEGPEQTLHCEARGNPEPSVHCARPEGGAVLALGLLGPVTRALAGTYRCTAVNGQGQAVKDVTLTVEYAPALDSVGCPEHITWLEGTEASLSCVAHGVPPPSVSCVRSGKEEVMEGPLRVAREHAGTYRCEAINARGSAAKNVAVTVEYGPSFEELGCPSNWTWVEGSGKLFSCEVDGKPEPRVECVGSEGASEGIVLPLVSSNSGPRNSMTPGNLSPGIYLCNATNRHGSTVKTVVVSAESPPQMDESSCPSHQTWLEGAEATALACSARGRPSPRVHCSREGAARLERLQVSREDAGTYRCVATNAHGTDSRTVTVGVEYRPVVAELAASPPSVRPGGNFTLTCRAEAWPPAQISWRAPPGALNLGLSSNNSTLSVAGAMGSHGGEYECAATNAHGRHARRITVRVAGPWLWVAVGGAAGGAALLAAGAGLAFYVQSTACKKGEYNVQEAESSGEAVCLNGAGGTPGAEGGAETPGTAESPADGEVFAIQLTSS.

An N-terminal signal peptide occupies residues 1–31; it reads MPGPSPGLRRALLGLWAALGLGILGISAVAL. Residues 32–833 are Extracellular-facing; it reads EPFWADLQPR…RITVRVAGPW (802 aa). Ig-like C2-type domains are found at residues 48–130, 135–235, 242–329, 337–402, 408–486, 491–567, 572–651, 665–738, and 745–828; these read GGSL…PLPS, GENF…SLIA, DSER…LLTL, GKMV…SSEL, PRLD…VTLT, PALD…VAVT, PSFE…NRHG, PQMD…RTVT, and PVVA…ITVR. Asparagine 54 carries N-linked (GlcNAc...) (high mannose) asparagine glycosylation. 2 cysteine pairs are disulfide-bonded: cysteine 55–cysteine 99 and cysteine 59–cysteine 103. 2 N-linked (GlcNAc...) asparagine glycosylation sites follow: asparagine 74 and asparagine 137. A disulfide bridge links cysteine 142 with cysteine 198. Threonine 182 is modified (phosphothreonine). 6 N-linked (GlcNAc...) asparagine glycosylation sites follow: asparagine 195, asparagine 214, asparagine 274, asparagine 316, asparagine 371, and asparagine 397. Cysteines 249 and 302 form a disulfide. Cysteine 344 and cysteine 383 are joined by a disulfide. Cystine bridges form between cysteine 415–cysteine 470, cysteine 498–cysteine 551, and cysteine 579–cysteine 644. Residues asparagine 582 and asparagine 645 are each glycosylated (N-linked (GlcNAc...) asparagine). Cysteine 672 and cysteine 724 are disulfide-bonded. N-linked (GlcNAc...) asparagine glycans are attached at residues asparagine 762, asparagine 793, and asparagine 794. Cysteines 767 and 812 form a disulfide. A helical membrane pass occupies residues 834-854; the sequence is LWVAVGGAAGGAALLAAGAGL. Residues 855 to 917 lie on the Cytoplasmic side of the membrane; it reads AFYVQSTACK…EVFAIQLTSS (63 aa). The segment covering 884–893 has biased composition (gly residues); sequence GAGGTPGAEG. The disordered stretch occupies residues 884 to 908; that stretch reads GAGGTPGAEGGAETPGTAESPADGE.

The protein belongs to the immunoglobulin superfamily. ICAM family. Post-translationally, glycosylation at Asn-54 is critical for functional folding. Expressed on neurons in the most rostral segment of the mammalian brain, the telencephalon.

The protein localises to the membrane. In terms of biological role, ICAM proteins are ligands for the leukocyte adhesion protein LFA-1 (integrin alpha-L/beta-2). The sequence is that of Intercellular adhesion molecule 5 (Icam5) from Mus musculus (Mouse).